The following is a 150-amino-acid chain: Probable cyclase FGR4 (150 aa).

Its pathway is secondary metabolite biosynthesis. Its function is as follows. Probable cyclase; part of the gene cluster that mediates the biosynthesis of the tetraketides fugralins such as linear fugralin A and cyclic fugralin B, volatile compounds that play a role in the asexual reproductive cycle but are not involved in pathogenicity. Fugralin B is similar to fugralin A except for a cyclization between the carboxylic acid C-8 and the alcohol on C-4 resulting in a six membered lactone ring, probably catalyzed by the cyclase FGR4. One of the key features of fugralins is the presence of a double methyl group, which is only rarely encountered in fungal secondary metabolites. As the fugralins cluster does not contain an independent methyltransferase, the PKS FGR1 is probably responsible for adding two methyl groups to the same carbon atom. The exact role of the individual cluster genes remains unknown and further work is needed to unravel the biosynthetic pathway. The sequence is that of Probable cyclase FGR4 from Gibberella zeae (strain ATCC MYA-4620 / CBS 123657 / FGSC 9075 / NRRL 31084 / PH-1) (Wheat head blight fungus).